The chain runs to 299 residues: Pyridoxal 5'-phosphate synthase subunit PdxS (299 aa).

Asp-24 lines the D-ribose 5-phosphate pocket. Lys-81 functions as the Schiff-base intermediate with D-ribose 5-phosphate in the catalytic mechanism. Position 153 (Gly-153) interacts with D-ribose 5-phosphate. D-glyceraldehyde 3-phosphate is bound at residue Arg-165. Residues Gly-219 and 240 to 241 each bind D-ribose 5-phosphate; that span reads GS.

This sequence belongs to the PdxS/SNZ family. In terms of assembly, in the presence of PdxT, forms a dodecamer of heterodimers.

It catalyses the reaction aldehydo-D-ribose 5-phosphate + D-glyceraldehyde 3-phosphate + L-glutamine = pyridoxal 5'-phosphate + L-glutamate + phosphate + 3 H2O + H(+). Its pathway is cofactor biosynthesis; pyridoxal 5'-phosphate biosynthesis. In terms of biological role, catalyzes the formation of pyridoxal 5'-phosphate from ribose 5-phosphate (RBP), glyceraldehyde 3-phosphate (G3P) and ammonia. The ammonia is provided by the PdxT subunit. Can also use ribulose 5-phosphate and dihydroxyacetone phosphate as substrates, resulting from enzyme-catalyzed isomerization of RBP and G3P, respectively. This Methanococcus maripaludis (strain C7 / ATCC BAA-1331) protein is Pyridoxal 5'-phosphate synthase subunit PdxS.